We begin with the raw amino-acid sequence, 1217 residues long: Disease resistance protein RPS4 (1217 aa).

The TIR domain maps to 14–175; the sequence is PQHQVFINFR…EIVKAVKTAL (162 aa). Residue Glu-88 is part of the active site. Residues 211–472 form the NB-ARC domain; the sequence is EQRLKDLEEK…FRSQDKDYVE (262 aa). 11 LRR repeats span residues 260–285, 436–459, 614–636, 637–659, 682–706, 708–728, 729–749, 750–774, 796–818, 819–842, and 861–887; these read HALI…LLGE, PNIV…AFLD, LKEV…DFNP, INLV…DKDT, AEKL…MKKM, MLAF…EMNL, ISLK…PLIS, DNIE…KLQR, LKAL…EIDI, SFLN…SVQY, and LSQL…NLQC. Positions 1162-1195 are disordered; it reads TEGVDGRVKKKKKTRMDNGRPKKKQRSGRDDNQT. Positions 1170–1177 match the Nuclear localization signal motif; it reads KKKKKTRM.

In terms of assembly, interacts with EDS1.

It is found in the nucleus. The catalysed reaction is NAD(+) + H2O = ADP-D-ribose + nicotinamide + H(+). Its function is as follows. Disease resistance (R) protein that specifically recognizes the AvrRps4 type III effector avirulence protein from Pseudomonas syringae. Resistance proteins guard the plant against pathogens that contain an appropriate avirulence protein via an indirect interaction with this avirulence protein. That triggers a defense system including the hypersensitive response, which restricts the pathogen growth. The combined presence of both regular and alternative RPS4 transcripts with truncated open reading frames (ORFs) is necessary for function. RPS4 function is regulated at multiple levels, including gene expression, alternative splicing, and protein stability. Acts as a disease resistance protein involved in resistance to fungal and bacterial pathogens, including R.solanacearum, P.syringae pv. tomato and C.higginsianum. In presence of RRS1, elicites an EDS1-dependent hypersensitive response. The polypeptide is Disease resistance protein RPS4 (Arabidopsis thaliana (Mouse-ear cress)).